Reading from the N-terminus, the 543-residue chain is Probable zinc transporter protein DDB_G0283629 (543 aa).

Residues 1–175 (MENFKNNELE…EESKPLNQLR (175 aa)) are disordered. The Cytoplasmic segment spans residues 1 to 186 (MENFKNNELE…LDSKKKARYS (186 aa)). Composition is skewed to low complexity over residues 11–26 (SSPI…SINN) and 41–55 (NNNN…NSHI). 2 stretches are compositionally biased toward basic and acidic residues: residues 56-66 (NNHDHKHNHEH) and 76-104 (HNHD…EHNV). Residues 105–116 (GNKNLLTNNNNQ) show a composition bias toward low complexity. Residues 130-140 (EDGSSSGGGGG) are compositionally biased toward gly residues. A helical transmembrane segment spans residues 187-207 (LILALTLTTIFMVGEIVGGYF). The Extracellular portion of the chain corresponds to 208 to 216 (ANSLAIMTD). Residues 217 to 237 (AAHLLTDIGAMFLSLFAMWIS) traverse the membrane as a helical segment. The Cytoplasmic portion of the chain corresponds to 238–251 (QHPPTSSMSFGFHR). A helical transmembrane segment spans residues 252–272 (AEILGALVSVLMIWALTGVLV). Over 273–289 (YEAIQRILYPPDAVDGK) the chain is Extracellular. Residues 290-310 (IMFIIASCGLFINIIDAIILH) form a helical membrane-spanning segment. The Cytoplasmic portion of the chain corresponds to 311-375 (WGSGGHGHSH…VRNINVHSAY (65 aa)). The tract at residues 319–342 (SHGGGHGHSHGIGGGTQKKKSKKN) is disordered. Residues 376–396 (IHVLGDCFQSIGVMVASCIIW) traverse the membrane as a helical segment. Over 397–402 (VHPHWK) the chain is Extracellular. Residues 403 to 423 (IADPITTLIFSVIVLGTTIKL) form a helical membrane-spanning segment. The Cytoplasmic portion of the chain corresponds to 424–543 (LRESLGVLME…NDNLSSPPNQ (120 aa)). A disordered region spans residues 516–543 (KCKDHSCPPPKPKKKKIKNDNLSSPPNQ).

This sequence belongs to the cation diffusion facilitator (CDF) transporter (TC 2.A.4) family. SLC30A subfamily.

It is found in the membrane. May be involved in zinc transport from the cytoplasm to either intracellular organelles or extracellular spaces. This Dictyostelium discoideum (Social amoeba) protein is Probable zinc transporter protein DDB_G0283629.